A 1827-amino-acid chain; its full sequence is Chromodomain-helicase-DNA-binding protein 2 (1827 aa).

Positions 1–14 (MMRNKDKSQEEDSS) are enriched in basic and acidic residues. The tract at residues 1 to 264 (MMRNKDKSQE…EQQDNSETIE (264 aa)) is disordered. The segment covering 15–75 (LHSNASSRSA…SESESAGSKS (61 aa)) has biased composition (low complexity). 3 stretches are compositionally biased toward basic and acidic residues: residues 81–101 (EAKE…KMWE), 115–128 (SRQE…KEEA), and 146–155 (KKQEKWKQDP). The segment covering 175–204 (GKARRPVPRRTVPKPQVKKQPKIQRGKRKK) has biased composition (basic residues). Phosphoserine occurs at positions 207 and 208. A compositionally biased stretch (acidic residues) spans 234–258 (EDDDFETDSDDLIEMTGEGGDEQQD). Phosphothreonine is present on Thr240. At Ser242 the chain carries Phosphoserine. Chromo domains follow at residues 261–353 (ETIE…QWLG) and 378–456 (QIVE…IPTR). The region spanning 496-666 (AHSWCKSNSV…WSLLHFIMPE (171 aa)) is the Helicase ATP-binding domain. 509–516 (DEMGLGKT) provides a ligand contact to ATP. The short motif at 617–620 (DEAH) is the DEAH box element. The Helicase C-terminal domain occupies 795 to 946 (LLDKLLTRLR…HLVIQRMDTT (152 aa)). 4 disordered regions span residues 1030 to 1124 (EDEE…RSVR), 1329 to 1465 (GTVA…DDLD), 1556 to 1638 (HKKR…ADRG), and 1679 to 1827 (HMDA…VRKT). A compositionally biased stretch (basic and acidic residues) spans 1037–1065 (ERPHKDWDEIIPEEQRKKVEEEERQKELE). A phosphoserine mark is found at Ser1085, Ser1087, Ser1365, and Ser1386. Basic and acidic residues predominate over residues 1347–1371 (KKENKAPRLKDEHGLEPASPRHSDN). Composition is skewed to basic and acidic residues over residues 1396-1431 (ENKE…KGGD) and 1565-1574 (EQKKKDDSLG). Positions 1464-1566 (LDQETFSICK…KKRSQEEEEQ (103 aa)) are CHD1 helical C-terminal domain (CHCT). The span at 1584 to 1601 (SGSSRDSLISQSHTSHNL) shows a compositional bias: polar residues. Basic and acidic residues-rich tracts occupy residues 1697–1719 (RPYE…DRHH), 1738–1748 (QDFRRMSDHRP), 1759–1771 (DHYR…KLGE), and 1794–1813 (SPHD…RSLE). At Ser1806 the chain carries Phosphoserine.

Interacts with MYOD1. Interacts with histone H3.3. As to expression, widely expressed.

Its subcellular location is the nucleus. It carries out the reaction ATP + H2O = ADP + phosphate + H(+). Its function is as follows. ATP-dependent chromatin-remodeling factor that specifically binds to the promoter of target genes, leading to chromatin remodeling, possibly by promoting deposition of histone H3.3. Involved in myogenesis via interaction with MYOD1: binds to myogenic gene regulatory sequences and mediates incorporation of histone H3.3 prior to the onset of myogenic gene expression, promoting their expression. The chain is Chromodomain-helicase-DNA-binding protein 2 (Chd2) from Mus musculus (Mouse).